The sequence spans 410 residues: Peptidase T (410 aa).

The tract at residues 11 to 30 (RYAEIDTQSDPDSESTPSTE) is disordered. His-78 serves as a coordination point for Zn(2+). Asp-80 is a catalytic residue. Asp-140 provides a ligand contact to Zn(2+). Glu-174 acts as the Proton acceptor in catalysis. Residues Glu-175, Asp-197, and His-379 each coordinate Zn(2+).

This sequence belongs to the peptidase M20B family. The cofactor is Zn(2+).

Its subcellular location is the cytoplasm. The catalysed reaction is Release of the N-terminal residue from a tripeptide.. Cleaves the N-terminal amino acid of tripeptides. The protein is Peptidase T of Staphylococcus carnosus (strain TM300).